Consider the following 288-residue polypeptide: Acetyl-coenzyme A carboxylase carboxyl transferase subunit beta (288 aa).

A CoA carboxyltransferase N-terminal domain is found at 34–288; that stretch reads LFAKCPACKH…HLVAFHGGGQ (255 aa). Zn(2+)-binding residues include Cys-38, Cys-41, Cys-56, and Cys-59. Residues 38–59 form a C4-type zinc finger; sequence CPACKHMIYKKDLGLAKICPTC.

The protein belongs to the AccD/PCCB family. As to quaternary structure, acetyl-CoA carboxylase is a heterohexamer composed of biotin carboxyl carrier protein (AccB), biotin carboxylase (AccC) and two subunits each of ACCase subunit alpha (AccA) and ACCase subunit beta (AccD). The cofactor is Zn(2+).

It localises to the cytoplasm. It catalyses the reaction N(6)-carboxybiotinyl-L-lysyl-[protein] + acetyl-CoA = N(6)-biotinyl-L-lysyl-[protein] + malonyl-CoA. It functions in the pathway lipid metabolism; malonyl-CoA biosynthesis; malonyl-CoA from acetyl-CoA: step 1/1. Functionally, component of the acetyl coenzyme A carboxylase (ACC) complex. Biotin carboxylase (BC) catalyzes the carboxylation of biotin on its carrier protein (BCCP) and then the CO(2) group is transferred by the transcarboxylase to acetyl-CoA to form malonyl-CoA. In Streptococcus pyogenes serotype M3 (strain ATCC BAA-595 / MGAS315), this protein is Acetyl-coenzyme A carboxylase carboxyl transferase subunit beta.